We begin with the raw amino-acid sequence, 198 residues long: MTTILQINSSARSQGAQSTLLANELTAKLQQSNPGAQVVVRNLHEDALPHLDDAILGAFFTPAEQRTAEQQAIAARSEALIAELQAADIVVIGAPLYNFGISSQLKTYFDFIARAGITFKYGANGPEGLVKGKKVFVVSARGGKYAGTPGDSQTPYLTTFLGFLGMTDVSFIYAEGLNMGPDAASAALAGAREAIAAA.

FMN is bound at residue Ser10.

The protein belongs to the azoreductase type 1 family. Homodimer. Requires FMN as cofactor.

The catalysed reaction is 2 a quinone + NADH + H(+) = 2 a 1,4-benzosemiquinone + NAD(+). The enzyme catalyses N,N-dimethyl-1,4-phenylenediamine + anthranilate + 2 NAD(+) = 2-(4-dimethylaminophenyl)diazenylbenzoate + 2 NADH + 2 H(+). Functionally, quinone reductase that provides resistance to thiol-specific stress caused by electrophilic quinones. Its function is as follows. Also exhibits azoreductase activity. Catalyzes the reductive cleavage of the azo bond in aromatic azo compounds to the corresponding amines. This chain is FMN-dependent NADH:quinone oxidoreductase, found in Paraburkholderia phymatum (strain DSM 17167 / CIP 108236 / LMG 21445 / STM815) (Burkholderia phymatum).